We begin with the raw amino-acid sequence, 217 residues long: Adenylate kinase (217 aa).

10–15 (GAGKGT) is a binding site for ATP. Positions 30 to 59 (STGDMFRAAIKEGTELGLQAKSFMDQGALV) are NMP. AMP-binding positions include Thr-31, Arg-36, 57–59 (ALV), 85–88 (GFPR), and Gln-92. Positions 126-163 (GRRICKTCGASYHLIFNPPAEEGKCDKDGGELYTRADD) are LID. ATP is bound at residue Arg-127. Positions 130 and 133 each coordinate Zn(2+). Residue 136–137 (SY) participates in ATP binding. Zn(2+) is bound by residues Cys-150 and Asp-153. AMP is bound by residues Arg-160 and Arg-171. Gln-199 contacts ATP.

The protein belongs to the adenylate kinase family. As to quaternary structure, monomer.

It localises to the cytoplasm. It carries out the reaction AMP + ATP = 2 ADP. The protein operates within purine metabolism; AMP biosynthesis via salvage pathway; AMP from ADP: step 1/1. Its function is as follows. Catalyzes the reversible transfer of the terminal phosphate group between ATP and AMP. Plays an important role in cellular energy homeostasis and in adenine nucleotide metabolism. This Lysinibacillus sphaericus (strain C3-41) protein is Adenylate kinase.